A 94-amino-acid chain; its full sequence is Phosphoribosyl-ATP pyrophosphatase (94 aa).

This sequence belongs to the PRA-PH family.

Its subcellular location is the cytoplasm. The catalysed reaction is 1-(5-phospho-beta-D-ribosyl)-ATP + H2O = 1-(5-phospho-beta-D-ribosyl)-5'-AMP + diphosphate + H(+). It functions in the pathway amino-acid biosynthesis; L-histidine biosynthesis; L-histidine from 5-phospho-alpha-D-ribose 1-diphosphate: step 2/9. This is Phosphoribosyl-ATP pyrophosphatase from Pyrobaculum calidifontis (strain DSM 21063 / JCM 11548 / VA1).